The following is a 378-amino-acid chain: DNA replication and repair protein RecF (378 aa).

ATP is bound at residue 30-37; sequence GRNGQGKT.

This sequence belongs to the RecF family.

It localises to the cytoplasm. Functionally, the RecF protein is involved in DNA metabolism; it is required for DNA replication and normal SOS inducibility. RecF binds preferentially to single-stranded, linear DNA. It also seems to bind ATP. The protein is DNA replication and repair protein RecF of Frankia alni (strain DSM 45986 / CECT 9034 / ACN14a).